Reading from the N-terminus, the 303-residue chain is MQYKKTLVASALAATTLAAYAPSEPWSTLTPTATYSGGVTDYASTFGIAVQPISTTSSASSAATTASSKAKRAASQIGDGQVQAATTTASVSTKSSAAAVSQIGDGQIQATTKTTAAASLKLVMVKIQATTKTTAAAVSQIGDGQVQATTKTTAAAVSQITDGQVQATTKTTQAASQVSDGQVQATSATSASAAATSTDPVDAVSCKTSGTLEMNLKGGILTDGKGRIGSIVANRQFQFDGPPPQAGAIYAAGWSITPDGNLAIGDNDVFYQCLSGTFYNLYDEHIGSQCTPVHLEAIDLIDC.

The first 18 residues, 1 to 18 (MQYKKTLVASALAATTLA), serve as a signal peptide directing secretion. The propeptide occupies 19-72 (AYAPSEPWSTLTPTATYSGGVTDYASTFGIAVQPISTTSSASSAATTASSKAKR). 2 PIR1/2/3 repeats span residues 71–89 (KRAASQIGDGQVQAATTTA) and 97–113 (AAAVSQIGDGQIQATTK). The PIR1/2/3 3; degenerate repeat unit spans residues 114 to 134 (TTAAASLKLVMVKIQATTKTT). PIR1/2/3 repeat units follow at residues 135 to 153 (AAAVSQIGDGQVQATTKTT), 154 to 171 (AAAVSQITDGQVQATTKT), and 172 to 190 (TQAASQVSDGQVQATSATS).

It belongs to the PIR protein family. In terms of processing, covalently linked to beta-1,3-glucan of the inner cell wall layer via an alkali-sensitive ester linkage between the gamma-carboxyl group of glutamic acids, arising from specific glutamines within the PIR1/2/3 repeats, and hydroxyl groups of glucoses of beta-1,3-glucan chains. The propeptide is cleaved off in the late Golgi. While both peptides are secreted, only a fraction of the mature glycoprotein is incorporated into the cell wall. Post-translationally, O-glycosylated. Extensively O-mannosylated.

It is found in the secreted. It localises to the cell wall. Its function is as follows. Component of the outer cell wall layer. Required for stability of the cell wall and for optimal growth. Required for resistance against several antifungal and cell wall-perturbing agents and for tolerance to heat shock. The polypeptide is Cell wall mannoprotein HSP150 (HSP150) (Saccharomyces cerevisiae (strain AWRI1631) (Baker's yeast)).